Reading from the N-terminus, the 463-residue chain is POU domain, class 2, transcription factor 2 (463 aa).

Disordered regions lie at residues 1-87, 159-182, 259-282, 341-376, and 393-463; these read MVHS…QPHL, QPRA…EEPS, SSLP…GRRR, PCSA…LSQA, and TLHP…PYQP. Over residues 12–37 the composition is skewed to basic and acidic residues; it reads RMSKPLEAEKQSLDSPSEHTDTERNG. Residues 41 to 60 are compositionally biased toward polar residues; it reads NHQNPQNKASPFSVSPTGPS. Residues 75-85 are compositionally biased toward pro residues; the sequence is AAPPPPQPAQP. The 75-residue stretch at 179–253 folds into the POU-specific domain; that stretch reads EEPSDLEELE…LLEKWLNDAE (75 aa). Low complexity predominate over residues 259–272; that stretch reads SSLPSPNQLSSPSL. A DNA-binding region (homeobox) is located at residues 281 to 340; sequence RRKKRTSIETNVRFALEKSFLANQKPTSEEILLIAEQLHMEKEVIRVWFCNRRQKEKRIN. Positions 373–394 are leucine-zipper; sequence LSQASSSLSTTVTTLSSAVGTL. The segment covering 400–409 has biased composition (gly residues); sequence AGGGGGGGGA.

This sequence belongs to the POU transcription factor family. Class-2 subfamily. As to quaternary structure, interacts with NR3C1, AR and PGR. Interacts with POU2AF1; the interaction increases POU2F2 transactivation activity. Highest in B cells, but also present in brain (neuronal and glial cells), intestine, kidney, and testes. In terms of tissue distribution, expressed at higher levels in B-cells than in neuronal cells. As to expression, expressed in neuronal cell lines and brain, but not dorsal root ganglia. Expressed at lower levels in neuronal cells than in B cells. In terms of tissue distribution, expressed in neuronal cell lines, and at lower levels in neuroblastoma and dorsal root ganglia. As to expression, widely expressed in the developing nervous system but expression is confined to very specific regions in the adult brain, it is expressed at a lower level in B cells. Either absent in, or expressed at very low levels in neuronal cells and brain. In terms of tissue distribution, expressed in all tissues tested: mammary gland, liver, spleen, lung, kidney intestine, uterus and ovary of a virgin mouse. Levels of isoform OCT2.7 are highest in spleen and lung. In mammary gland, expression is localized to the alveolus epithelial cells.

It is found in the cytoplasm. The protein resides in the nucleus. With respect to regulation, transactivation activity is enhanced by transcriptional coactivator POU2AF1. Transcription factor that specifically binds to the octamer motif (5'-ATTTGCAT-3'). Regulates IL6 expression in B cells with POU2AF1. Regulates transcription in a number of tissues in addition to activating immunoglobulin gene expression. Modulates transcription transactivation by NR3C1, AR and PGR. Its function is as follows. Activates octamer-containing promoters. Functionally, represses some promoters and activate others. In terms of biological role, represses some promoters and activate others. Activates the U2 small nuclear RNA (snRNA) promoter. Unable to bind to the octamer motif, but can still activate the beta-casein gene promoter at low levels. The polypeptide is POU domain, class 2, transcription factor 2 (Mus musculus (Mouse)).